Reading from the N-terminus, the 435-residue chain is Methylenetetrahydrofolate--tRNA-(uracil-5-)-methyltransferase TrmFO (435 aa).

9 to 14 (GAGLAG) lines the FAD pocket.

It belongs to the MnmG family. TrmFO subfamily. It depends on FAD as a cofactor.

The protein resides in the cytoplasm. It carries out the reaction uridine(54) in tRNA + (6R)-5,10-methylene-5,6,7,8-tetrahydrofolate + NADH + H(+) = 5-methyluridine(54) in tRNA + (6S)-5,6,7,8-tetrahydrofolate + NAD(+). The catalysed reaction is uridine(54) in tRNA + (6R)-5,10-methylene-5,6,7,8-tetrahydrofolate + NADPH + H(+) = 5-methyluridine(54) in tRNA + (6S)-5,6,7,8-tetrahydrofolate + NADP(+). Catalyzes the folate-dependent formation of 5-methyl-uridine at position 54 (M-5-U54) in all tRNAs. The polypeptide is Methylenetetrahydrofolate--tRNA-(uracil-5-)-methyltransferase TrmFO (Staphylococcus epidermidis (strain ATCC 35984 / DSM 28319 / BCRC 17069 / CCUG 31568 / BM 3577 / RP62A)).